Reading from the N-terminus, the 347-residue chain is Putative adhesin P1-like protein MPN_099 (347 aa).

Positions 282–300 (FGTDHSTQPQPQSLKTTTP) are enriched in polar residues. The interval 282-302 (FGTDHSTQPQPQSLKTTTPVF) is disordered.

Belongs to the adhesin P1 family.

The sequence is that of Putative adhesin P1-like protein MPN_099 from Mycoplasma pneumoniae (strain ATCC 29342 / M129 / Subtype 1) (Mycoplasmoides pneumoniae).